The chain runs to 318 residues: 3'-5' exoribonuclease YhaM (318 aa).

The region spanning 163-279 is the HD domain; the sequence is HVVSMLDLAK…LHYIDNLDAK (117 aa).

Belongs to the YhaM family.

Functionally, shows a 3'-5' exoribonuclease activity. The sequence is that of 3'-5' exoribonuclease YhaM from Bacillus cytotoxicus (strain DSM 22905 / CIP 110041 / 391-98 / NVH 391-98).